A 458-amino-acid chain; its full sequence is Maturase-like protein 1 (458 aa).

To group II intron maturases.

It is found in the plastid. The protein localises to the chloroplast. In terms of biological role, could be required for group III intron excision. This chain is Maturase-like protein 1 (mat1), found in Euglena gracilis.